The primary structure comprises 256 residues: Thiazole synthase (256 aa).

Lysine 97 (schiff-base intermediate with DXP) is an active-site residue. 1-deoxy-D-xylulose 5-phosphate is bound by residues glycine 158, alanine 184–glycine 185, and asparagine 206–threonine 207.

It belongs to the ThiG family. Homotetramer. Forms heterodimers with either ThiH or ThiS.

The protein resides in the cytoplasm. The catalysed reaction is [ThiS sulfur-carrier protein]-C-terminal-Gly-aminoethanethioate + 2-iminoacetate + 1-deoxy-D-xylulose 5-phosphate = [ThiS sulfur-carrier protein]-C-terminal Gly-Gly + 2-[(2R,5Z)-2-carboxy-4-methylthiazol-5(2H)-ylidene]ethyl phosphate + 2 H2O + H(+). It participates in cofactor biosynthesis; thiamine diphosphate biosynthesis. Catalyzes the rearrangement of 1-deoxy-D-xylulose 5-phosphate (DXP) to produce the thiazole phosphate moiety of thiamine. Sulfur is provided by the thiocarboxylate moiety of the carrier protein ThiS. In vitro, sulfur can be provided by H(2)S. In Pelotomaculum thermopropionicum (strain DSM 13744 / JCM 10971 / SI), this protein is Thiazole synthase.